Consider the following 624-residue polypeptide: Kelch-like ECH-associated protein 1 (624 aa).

Cys38 is modified (S-(2-succinyl)cysteine). Residues 77–149 form the BTB domain; sequence CDVTLQVKYE…AYTASISVGE (73 aa). Arg135 participates in a covalent cross-link: N5-[4-(S-L-cysteinyl)-5-methyl-1H-imidazol-2-yl]-L-ornithine (Arg-Cys) (interchain with C-151 in KEAP1). Cys151 is subject to S-(2,3-dicarboxypropyl)cysteine; alternate. S-(2-succinyl)cysteine; alternate is present on Cys151. An S-nitrosocysteine; alternate modification is found at Cys151. An N5-[4-(S-L-cysteinyl)-5-methyl-1H-imidazol-2-yl]-L-ornithine (Cys-Arg) (interchain with R-135 in KEAP1) cross-link involves residue Cys151. Residues 184-286 enclose the BACK domain; it reads AIGIANFAEQ…TPRFLQTQLQ (103 aa). Cys241 is subject to S-(2-succinyl)cysteine. Cys257 and Cys273 each carry S-(2,3-dicarboxypropyl)cysteine. Cys288 is subject to S-(2,3-dicarboxypropyl)cysteine; alternate. The residue at position 288 (Cys288) is an S-(2-succinyl)cysteine; alternate. S-(2-succinyl)cysteine is present on Cys319. 6 Kelch repeats span residues 327-372, 373-423, 424-470, 471-517, 519-564, and 565-611; these read LIYT…VVGG, LLYA…VIDG, HIYA…VLNR, LLYA…VLHN, IYAA…VHQG, and KIYV…VTME. S-cGMP-cysteine is present on Cys434. Cys613 bears the S-(2-succinyl)cysteine mark.

This sequence belongs to the KEAP1 family. As to quaternary structure, component of the BCR(KEAP1) E3 ubiquitin ligase complex, at least composed of 2 molecules of CUL3, 2 molecules of KEAP1, and RBX1. Interacts with NFE2L2/NRF2; the interaction is direct. Forms a ternary complex with NFE2L2/NRF2 and PGAM5. Interacts with (phosphorylated) SQSTM1/p62; the interaction is direct and inactivates the BCR(KEAP1) complex by sequestering it in inclusion bodies, promoting its degradation. Interacts with NFE2L1. Interacts with BPTF and PTMA. Interacts with MAP1LC3B. Interacts indirectly with ENC1. Interacts with SESN1 and SESN2. Interacts with HSP90AA1 and HSP90AB1. Interacts with PGCKA1; this interaction prevents the ubiquitination of KEAP1 by TRIM25, thus protecting KEAP1 from degradation. Non-enzymatic covalent modifications of reactive cysteines by electrophile metabolites inactivate the BCR(KEAP1) complex. Accumulation of fumarate promotes the formation of cysteine S-succination (S-(2-succinyl)cysteine), leading to inactivate the BCR(KEAP1) complex and promote NFE2L2/NRF2 nuclear accumulation and activation. Nitric oxide-dependent 8-Nitro-cGMP formation promotes cysteine guanylation (S-cGMP-cysteine), leading to NFE2L2/NRF2 nuclear accumulation and activation. Itaconate, an anti-inflammatory metabolite generated in response to lipopolysaccharide, alkylates cysteines, activating NFE2L2/NRF2. Methylglyoxal, a reactive metabolite that accumulates when the glycolytic enzyme PGK1 is inhibited, promotes formation of a methylimidazole cross-link between proximal Cys-151 and Arg-135 on another KEAP1 molecule, resulting in an inactive dimer that inactivates the BCR(KEAP1) complex. Post-translationally, degraded via a proteasomal-independent process during selective autophagy: interaction with phosphorylated SQSTM1/p62 sequesters KEAP1 in inclusion bodies, leading to its degradation. In terms of processing, auto-ubiquitinated by the BCR(KEAP1) complex. Quinone-induced oxidative stress, but not sulforaphane, increases its ubiquitination. Ubiquitination and subsequent degradation is most pronounced following prolonged exposure of cells to oxidative stress, particularly in glutathione-deficient cells that are highly susceptible to oxidative stress. Deubiquitinated by USP25; leading to stabilization. Ubiquitinated by TRIM25; leading to degradation upon ER stress.

The protein resides in the cytoplasm. It is found in the nucleus. It participates in protein modification; protein ubiquitination. With respect to regulation, ubiquitin ligase activity of the BCR(KEAP1) complex is inhibited by oxidative stress and electrophile metabolites such as sulforaphane. Electrophile metabolites react with reactive cysteine residues in KEAP1 and trigger non-enzymatic covalent modifications of these cysteine residues, leading to inactivate the ubiquitin ligase activity of the BCR(KEAP1) complex. Selective autophagy also inactivates the BCR(KEAP1) complex via interaction between KEAP1 and SQSTM1/p62, which sequesters the complex in inclusion bodies and promotes its degradation. Substrate-specific adapter of a BCR (BTB-CUL3-RBX1) E3 ubiquitin ligase complex that regulates the response to oxidative stress by targeting NFE2L2/NRF2 for ubiquitination. KEAP1 acts as a key sensor of oxidative and electrophilic stress: in normal conditions, the BCR(KEAP1) complex mediates ubiquitination and degradation of NFE2L2/NRF2, a transcription factor regulating expression of many cytoprotective genes. In response to oxidative stress, different electrophile metabolites trigger non-enzymatic covalent modifications of highly reactive cysteine residues in KEAP1, leading to inactivate the ubiquitin ligase activity of the BCR(KEAP1) complex, promoting NFE2L2/NRF2 nuclear accumulation and expression of phase II detoxifying enzymes. In response to selective autophagy, KEAP1 is sequestered in inclusion bodies following its interaction with SQSTM1/p62, leading to inactivation of the BCR(KEAP1) complex and activation of NFE2L2/NRF2. The BCR(KEAP1) complex also mediates ubiquitination of SQSTM1/p62, increasing SQSTM1/p62 sequestering activity and degradation. The BCR(KEAP1) complex also targets BPTF and PGAM5 for ubiquitination and degradation by the proteasome. This Mus musculus (Mouse) protein is Kelch-like ECH-associated protein 1.